Here is a 902-residue protein sequence, read N- to C-terminus: Cytosolic carboxypeptidase 2 (902 aa).

Residues 396 to 666 (YPYTYTDLQC…HVCDTLLDFC (271 aa)) form the Peptidase M14 domain. Residues His-462, Glu-465, and His-558 each coordinate Zn(2+). Glu-630 (proton donor/acceptor) is an active-site residue. Basic residues predominate over residues 746–758 (FKKKKKKSLQTRK). 2 disordered regions span residues 746–770 (FKKK…KNLM) and 796–879 (FKNS…PRSR). Positions 853–866 (VSCSPKRTINSSQE) are enriched in polar residues.

It belongs to the peptidase M14 family. Interacts with RARRES1, KIF11 AND MAPRE1. It depends on Zn(2+) as a cofactor.

It is found in the cytoplasm. Its subcellular location is the cytosol. It localises to the cytoskeleton. The protein localises to the microtubule organizing center. The protein resides in the centrosome. It is found in the centriole. Its subcellular location is the cilium basal body. The enzyme catalyses (L-glutamyl)(n+1)-gamma-L-glutamyl-L-glutamyl-[protein] + H2O = (L-glutamyl)(n)-gamma-L-glutamyl-L-glutamyl-[protein] + L-glutamate. Inhibited by RARRES1. Functionally, metallocarboxypeptidase that mediates deglutamylation of tubulin and non-tubulin target proteins. Catalyzes the removal of polyglutamate side chains present on the gamma-carboxyl group of glutamate residues within the C-terminal tail of tubulin protein. Specifically cleaves tubulin long-side-chains, while it is not able to remove the branching point glutamate. Also catalyzes the removal of polyglutamate residues from the carboxy-terminus of non-tubulin proteins such as MYLK. The polypeptide is Cytosolic carboxypeptidase 2 (Homo sapiens (Human)).